The sequence spans 302 residues: tRNA pseudouridine synthase B (302 aa).

Residue D43 is the Nucleophile of the active site.

It belongs to the pseudouridine synthase TruB family. Type 1 subfamily.

It catalyses the reaction uridine(55) in tRNA = pseudouridine(55) in tRNA. Its function is as follows. Responsible for synthesis of pseudouridine from uracil-55 in the psi GC loop of transfer RNAs. In Burkholderia pseudomallei (strain 668), this protein is tRNA pseudouridine synthase B.